The chain runs to 197 residues: GTP cyclohydrolase-2 (197 aa).

50–54 (RIHSE) contributes to the GTP binding site. Cysteine 55, cysteine 66, and cysteine 68 together coordinate Zn(2+). GTP is bound by residues glutamine 71, 93–95 (EGR), and threonine 115. Residue aspartate 127 is the Proton acceptor of the active site. Arginine 129 (nucleophile) is an active-site residue. GTP contacts are provided by threonine 150 and lysine 155.

It belongs to the GTP cyclohydrolase II family. Zn(2+) serves as cofactor.

The catalysed reaction is GTP + 4 H2O = 2,5-diamino-6-hydroxy-4-(5-phosphoribosylamino)-pyrimidine + formate + 2 phosphate + 3 H(+). It participates in cofactor biosynthesis; riboflavin biosynthesis; 5-amino-6-(D-ribitylamino)uracil from GTP: step 1/4. Catalyzes the conversion of GTP to 2,5-diamino-6-ribosylamino-4(3H)-pyrimidinone 5'-phosphate (DARP), formate and pyrophosphate. The chain is GTP cyclohydrolase-2 from Neisseria gonorrhoeae (strain ATCC 700825 / FA 1090).